Here is a 28-residue protein sequence, read N- to C-terminus: Putative GDSL-motif lipase/hydrolase-like protein (28 aa).

Belongs to the 'GDSL' lipolytic enzyme family.

The protein is Putative GDSL-motif lipase/hydrolase-like protein of Populus euphratica (Euphrates poplar).